Here is a 459-residue protein sequence, read N- to C-terminus: Putrescine aminotransferase (459 aa).

Pyridoxal 5'-phosphate-binding positions include 150–151 (GT) and Gln274. Lys300 carries the post-translational modification N6-(pyridoxal phosphate)lysine. Residue Thr332 coordinates pyridoxal 5'-phosphate.

It belongs to the class-III pyridoxal-phosphate-dependent aminotransferase family. Putrescine aminotransferase subfamily. Pyridoxal 5'-phosphate is required as a cofactor.

It carries out the reaction an alkane-alpha,omega-diamine + 2-oxoglutarate = an omega-aminoaldehyde + L-glutamate. The enzyme catalyses putrescine + 2-oxoglutarate = 1-pyrroline + L-glutamate + H2O. The catalysed reaction is cadaverine + 2-oxoglutarate = 5-aminopentanal + L-glutamate. The protein operates within amine and polyamine degradation; putrescine degradation; 4-aminobutanal from putrescine (transaminase route): step 1/1. Functionally, catalyzes the aminotransferase reaction from putrescine to 2-oxoglutarate, leading to glutamate and 4-aminobutanal, which spontaneously cyclizes to form 1-pyrroline. This is the first step in one of two pathways for putrescine degradation, where putrescine is converted into 4-aminobutanoate (gamma-aminobutyrate or GABA) via 4-aminobutanal. Also functions as a cadaverine transaminase in a a L-lysine degradation pathway to succinate that proceeds via cadaverine, glutarate and L-2-hydroxyglutarate. The sequence is that of Putrescine aminotransferase from Escherichia coli O6:H1 (strain CFT073 / ATCC 700928 / UPEC).